We begin with the raw amino-acid sequence, 261 residues long: Ribonuclease PH (261 aa).

Phosphate contacts are provided by residues Arg87 and 125 to 127 (GTR).

Belongs to the RNase PH family. In terms of assembly, homohexameric ring arranged as a trimer of dimers.

It catalyses the reaction tRNA(n+1) + phosphate = tRNA(n) + a ribonucleoside 5'-diphosphate. Its function is as follows. Phosphorolytic 3'-5' exoribonuclease that plays an important role in tRNA 3'-end maturation. Removes nucleotide residues following the 3'-CCA terminus of tRNAs; can also add nucleotides to the ends of RNA molecules by using nucleoside diphosphates as substrates, but this may not be physiologically important. Probably plays a role in initiation of 16S rRNA degradation (leading to ribosome degradation) during starvation. The chain is Ribonuclease PH from Desulforudis audaxviator (strain MP104C).